Consider the following 794-residue polypeptide: Signal transducer and activator of transcription 5A (794 aa).

Tyr-90 is subject to Phosphotyrosine. 2 positions are modified to phosphoserine: Ser-128 and Ser-193. Residues 589–686 enclose the SH2 domain; that stretch reads WNDGAILGFV…EVFSKYYTPV (98 aa). At Tyr-682 the chain carries Phosphotyrosine. Position 694 is a phosphotyrosine; by JAK2 (Tyr-694). The segment at 773 to 794 is disordered; it reads DSLDSRLSPPAGLFTSARGSLS. Ser-780 is subject to Phosphoserine.

This sequence belongs to the transcription factor STAT family. In terms of assembly, forms a homodimer or a heterodimer with a related family member. Binds NR3C1. Interacts with NCOA1 and SOCS7. Interacts with ERBB4. Interacts with EBF4. Interacts with CD69. In terms of processing, tyrosine phosphorylated in response to KITLG/SCF, IL2, IL3, IL7, IL15, CSF2/GMCSF, GH1, PRL, EPO and THPO. Activated KIT promotes phosphorylation on tyrosine residues and subsequent translocation to the nucleus. Tyrosine phosphorylated in response to constitutively activated FGFR1, FGFR2, FGFR3 and FGFR4. Tyrosine phosphorylation is required for DNA-binding activity and dimerization. Serine phosphorylation is also required for maximal transcriptional activity. Tyrosine phosphorylated in response to signaling via activated FLT3; wild-type FLT3 results in much weaker phosphorylation than constitutively activated mutant FLT3. Alternatively, can be phosphorylated by JAK2 at Tyr-694. Post-translationally, ISGylated.

Its subcellular location is the cytoplasm. The protein localises to the nucleus. Functionally, carries out a dual function: signal transduction and activation of transcription. Mediates cellular responses to the cytokine KITLG/SCF and other growth factors. Mediates cellular responses to ERBB4. May mediate cellular responses to activated FGFR1, FGFR2, FGFR3 and FGFR4. Binds to the GAS element and activates PRL-induced transcription. Regulates the expression of milk proteins during lactation. The polypeptide is Signal transducer and activator of transcription 5A (STAT5A) (Homo sapiens (Human)).